Consider the following 1420-residue polypeptide: tRNA (32-2'-O)-methyltransferase regulator TRM732 (1420 aa).

The tract at residues 748–754 (RRSGGLP) is required for activity.

This sequence belongs to the THADA family. Interacts with TRM7; for 2'-O-methylation of position 32 in substrate tRNAs.

Its subcellular location is the cytoplasm. In terms of biological role, together with methyltransferase TRM7, methylates the 2'-O-ribose of nucleotides at position 32 of the anticodon loop of substrate tRNAs. This chain is tRNA (32-2'-O)-methyltransferase regulator TRM732 (TRM732), found in Saccharomyces cerevisiae (strain ATCC 204508 / S288c) (Baker's yeast).